Consider the following 408-residue polypeptide: Multidrug resistance protein MdtG (408 aa).

Helical transmembrane passes span 16–36 (LIVA…VMPF), 58–78 (IVFS…GGLA), 92–112 (LGMG…QFLI), 115–135 (ALLG…ATQV), 146–166 (TLST…GLLA), 173–193 (PVFF…LFCI), 224–244 (LFVT…ILTL), 256–276 (VAFI…LSAP), 290–310 (ILIT…YVQT), 319–339 (FLLG…LVYN), and 378–398 (AVFL…WNSL).

It belongs to the major facilitator superfamily. DHA1 family. MdtG (TC 2.A.1.2.20) subfamily.

It localises to the cell inner membrane. Functionally, confers resistance to fosfomycin and deoxycholate. This Escherichia coli O127:H6 (strain E2348/69 / EPEC) protein is Multidrug resistance protein MdtG.